The sequence spans 832 residues: Alpha-glucan phosphorylase, H isozyme (832 aa).

Lysine 678 carries the post-translational modification N6-(pyridoxal phosphate)lysine.

Belongs to the glycogen phosphorylase family. Requires pyridoxal 5'-phosphate as cofactor.

The protein localises to the cytoplasm. The catalysed reaction is [(1-&gt;4)-alpha-D-glucosyl](n) + phosphate = [(1-&gt;4)-alpha-D-glucosyl](n-1) + alpha-D-glucose 1-phosphate. Its function is as follows. Phosphorylase is an important allosteric enzyme in carbohydrate metabolism. Enzymes from different sources differ in their regulatory mechanisms and in their natural substrates. However, all known phosphorylases share catalytic and structural properties. This Triticum aestivum (Wheat) protein is Alpha-glucan phosphorylase, H isozyme.